We begin with the raw amino-acid sequence, 468 residues long: Interleukin-6 receptor subunit alpha (468 aa).

The signal sequence occupies residues 1–19 (MLAVGCALLAALLAAPGAA). Residues 20–365 (LAPRRCPAQE…VQDSSSVPLP (346 aa)) are Extracellular-facing. Cystine bridges form between cysteine 25–cysteine 193, cysteine 47–cysteine 96, cysteine 121–cysteine 132, and cysteine 165–cysteine 176. An Ig-like C2-type domain is found at 26–112 (PAQEVARGVL…AGTVHLLVDV (87 aa)). Residues asparagine 55 and asparagine 93 are each glycosylated (N-linked (GlcNAc...) asparagine). Fibronectin type-III domains lie at 113 to 217 (PPEE…LQPD) and 218 to 316 (PPAN…TPWT). Residues asparagine 221 and asparagine 245 are each glycosylated (N-linked (GlcNAc...) asparagine). A WSXWS motif motif is present at residues 303-307 (WSEWS). Residues 303-328 (WSEWSPEAMGTPWTESRSPPAENEVS) are disordered. The N-linked (GlcNAc...) asparagine glycan is linked to asparagine 350. Threonine 352 is a glycosylation site (O-linked (GlcNAc) threonine). The helical transmembrane segment at 366-386 (TFLVAGGSLAFGTLLCIAIVL) threads the bilayer. At 387-468 (RFKKTWKLRA…ISNTDYFFPR (82 aa)) the chain is on the cytoplasmic side. Pro residues predominate over residues 421 to 433 (TPVLVPLISPPVS). Positions 421–468 (TPVLVPLISPPVSPSSLGSDNTSSHNRPDARDPRSPYDISNTDYFFPR) are disordered. Residues 446–455 (NRPDARDPRS) show a composition bias toward basic and acidic residues. Over residues 458–468 (DISNTDYFFPR) the composition is skewed to polar residues.

Belongs to the type I cytokine receptor family. Type 3 subfamily. As to quaternary structure, component of a hexamer of two molecules each of IL6, IL6R and IL6ST; first binds to IL6 to associate with the signaling subunit IL6ST. Interacts (via N-terminal ectodomain) with SORL1; this interaction may affect IL6-binding to IL6R, hence decrease IL6 'classic-signaling'. Also interacts with SORL1; this interaction leads to soluble IL6R internalization. May form a trimeric complex with the soluble SORL1 ectodomain and circulating IL6 receptor; this interaction might stabilize circulating IL6, hence promote IL6 'trans-signaling,. Post-translationally, a short soluble form is released from the membrane by proteolysis. The sIL6R is formed mostly by limited proteolysis of membrane-bound receptors, a process referred to as ectodomain shedding, but is also directly secreted from the cells after alternative mRNA splicing. mIL6R is cleaved by the proteases ADAM10 and ADAM17. Glycosylated. Glycosylation is dispensable for transport, signaling, and cell-surface turnover. Glycosylation at Asn-55 is a protease-regulatory exosite. Glycosylation is required for ADAM17-mediated proteolysis. Expressed in peripheral blood mononuclear cells and weakly found in urine and serum. 1%-20% of the total sIL6R in plasma is generated by alternative splicing.

The protein localises to the cell membrane. Its subcellular location is the secreted. With respect to regulation, classic and trans-signaling are both inhibited by tocilizumab, a humanized monoclonal antibody that blocks interleukin IL6R signaling. Part of the receptor for interleukin 6. Binds to IL6 with low affinity, but does not transduce a signal. Signal activation necessitate an association with IL6ST. Activation leads to the regulation of the immune response, acute-phase reactions and hematopoiesis. The interaction with membrane-bound IL6R and IL6ST stimulates 'classic signaling', the restricted expression of the IL6R limits classic IL6 signaling to only a few tissues such as the liver and some cells of the immune system. Whereas the binding of IL6 and soluble IL6R to IL6ST stimulates 'trans-signaling'. Alternatively, 'cluster signaling' occurs when membrane-bound IL6:IL6R complexes on transmitter cells activate IL6ST receptors on neighboring receiver cells. Its function is as follows. Signaling via the membrane-bound IL6R is mostly regenerative and anti-inflammatory. Drives naive CD4(+) T cells to the Th17 lineage, through 'cluster signaling' by dendritic cells. In terms of biological role, soluble form of IL6 receptor (sIL6R) that acts as an agonist of IL6 activity. The IL6:sIL6R complex (hyper-IL6) binds to IL6ST/gp130 on cell surfaces and induces signaling also on cells that do not express membrane-bound IL6R in a process called IL6 'trans-signaling'. sIL6R is causative for the pro-inflammatory properties of IL6 and an important player in the development of chronic inflammatory diseases. In complex with IL6, is required for induction of VEGF production. Plays a protective role during liver injury, being required for maintenance of tissue regeneration. 'Trans-signaling' in central nervous system regulates energy and glucose homeostasis. In Homo sapiens (Human), this protein is Interleukin-6 receptor subunit alpha.